The sequence spans 267 residues: Malonyl-[acyl-carrier protein] O-methyltransferase (267 aa).

Belongs to the methyltransferase superfamily.

It catalyses the reaction malonyl-[ACP] + S-adenosyl-L-methionine = malonyl-[ACP] methyl ester + S-adenosyl-L-homocysteine. It participates in cofactor biosynthesis; biotin biosynthesis. Its function is as follows. Converts the free carboxyl group of a malonyl-thioester to its methyl ester by transfer of a methyl group from S-adenosyl-L-methionine (SAM). It allows to synthesize pimeloyl-ACP via the fatty acid synthetic pathway. This is Malonyl-[acyl-carrier protein] O-methyltransferase from Geobacter sulfurreducens (strain ATCC 51573 / DSM 12127 / PCA).